The sequence spans 84 residues: Small ribosomal subunit protein uS17 (84 aa).

The protein belongs to the universal ribosomal protein uS17 family. As to quaternary structure, part of the 30S ribosomal subunit.

In terms of biological role, one of the primary rRNA binding proteins, it binds specifically to the 5'-end of 16S ribosomal RNA. The protein is Small ribosomal subunit protein uS17 of Enterobacter sp. (strain 638).